The sequence spans 855 residues: Inactive rhomboid protein 1 (855 aa).

Residues 1–36 (MSEARRDSTSSLQRKKPPWLKLDIPSAVPPTAEEPS) form a disordered region. The Cytoplasmic segment spans residues 1-411 (MSEARRDSTS…HRPFFTYWLT (411 aa)). Phosphoserine is present on residues serine 76 and serine 176. Phosphothreonine occurs at positions 180 and 183. A Phosphoserine modification is found at serine 390. A helical transmembrane segment spans residues 412 to 432 (FVHSLVTILAVCIYGIAPVGF). Residues 433-655 (SQHETVDSVL…NPEVPDQFYR (223 aa)) lie on the Lumenal side of the membrane. Residue asparagine 583 is glycosylated (N-linked (GlcNAc...) asparagine). The helical transmembrane segment at 656 to 676 (LWLSLFLHAGILHCLVSICFQ) threads the bilayer. Residues 677-691 (MTVLRDLEKLAGWHR) are Cytoplasmic-facing. The helical transmembrane segment at 692-712 (IAIIYLLSGVTGNLASAIFLP) threads the bilayer. The Lumenal portion of the chain corresponds to 713-714 (YR). Residues 715–735 (AEVGPAGSQFGILACLFVELF) traverse the membrane as a helical segment. Residues 736-746 (QSWQILARPWR) are Cytoplasmic-facing. Residues 747 to 767 (AFFKLLAVVLFLFTFGLLPWI) form a helical membrane-spanning segment. Residues 768 to 772 (DNFAH) lie on the Lumenal side of the membrane. Residues 773 to 793 (ISGFISGLFLSFAFLPYISFG) traverse the membrane as a helical segment. Residues 794–803 (KFDLYRKRCQ) are Cytoplasmic-facing. Residues 804–824 (IIIFQVVFLGLLAGLVVLFYF) form a helical membrane-spanning segment. Over 825-855 (YPVRCEWCEFLTCIPFTDKFCEKYELDAQLH) the chain is Lumenal.

This sequence belongs to the peptidase S54 family. In terms of assembly, homodimer, or homooligomer. Interacts with TGFA and HBEGF. Interacts with EGF; may retain EGF in the endoplasmic reticulum and regulates its degradation through the endoplasmic reticulum-associated degradation (ERAD). Interacts (via cytoplasmic N-terminus) with FRMD8/iTAP; this interaction leads to mutual protein stabilization. Interacts with ADAM17/TACE.

Its subcellular location is the endoplasmic reticulum membrane. It localises to the golgi apparatus membrane. In terms of biological role, regulates ADAM17 protease, a sheddase of the epidermal growth factor (EGF) receptor ligands and TNF, thereby plays a role in sleep, cell survival, proliferation, migration and inflammation. Does not exhibit any protease activity on its own. The polypeptide is Inactive rhomboid protein 1 (RHBDF1) (Papio anubis (Olive baboon)).